A 738-amino-acid polypeptide reads, in one-letter code: Phosphoribosylformylglycinamidine synthase subunit PurL (738 aa).

Residue His53 is part of the active site. Positions 56 and 95 each coordinate ATP. Glu97 serves as a coordination point for Mg(2+). Substrate-binding positions include 98–101 and Arg120; that span reads SHNH. His99 acts as the Proton acceptor in catalysis. Residue Asp121 coordinates Mg(2+). Gln244 is a substrate binding site. Asp274 is a binding site for Mg(2+). 318–320 is a substrate binding site; sequence ESQ. Residues Asp499 and Gly536 each contribute to the ATP site. Asn537 lines the Mg(2+) pocket. Ser539 provides a ligand contact to substrate.

It belongs to the FGAMS family. Monomer. Part of the FGAM synthase complex composed of 1 PurL, 1 PurQ and 2 PurS subunits.

The protein resides in the cytoplasm. It carries out the reaction N(2)-formyl-N(1)-(5-phospho-beta-D-ribosyl)glycinamide + L-glutamine + ATP + H2O = 2-formamido-N(1)-(5-O-phospho-beta-D-ribosyl)acetamidine + L-glutamate + ADP + phosphate + H(+). It functions in the pathway purine metabolism; IMP biosynthesis via de novo pathway; 5-amino-1-(5-phospho-D-ribosyl)imidazole from N(2)-formyl-N(1)-(5-phospho-D-ribosyl)glycinamide: step 1/2. Part of the phosphoribosylformylglycinamidine synthase complex involved in the purines biosynthetic pathway. Catalyzes the ATP-dependent conversion of formylglycinamide ribonucleotide (FGAR) and glutamine to yield formylglycinamidine ribonucleotide (FGAM) and glutamate. The FGAM synthase complex is composed of three subunits. PurQ produces an ammonia molecule by converting glutamine to glutamate. PurL transfers the ammonia molecule to FGAR to form FGAM in an ATP-dependent manner. PurS interacts with PurQ and PurL and is thought to assist in the transfer of the ammonia molecule from PurQ to PurL. The polypeptide is Phosphoribosylformylglycinamidine synthase subunit PurL (Leuconostoc mesenteroides subsp. mesenteroides (strain ATCC 8293 / DSM 20343 / BCRC 11652 / CCM 1803 / JCM 6124 / NCDO 523 / NBRC 100496 / NCIMB 8023 / NCTC 12954 / NRRL B-1118 / 37Y)).